Reading from the N-terminus, the 546-residue chain is Pectinesterase 1 (546 aa).

Positions 1–39 (MANPQQPLLIKTHKQNPIISFKILSFVITLFVALFLVAP) are cleaved as a signal peptide. Residues 40-229 (YQVEIKHSNL…RKLMESSGKD (190 aa)) constitute a propeptide that is removed on maturation. Positions 308 and 338 each coordinate substrate. C327 and C354 are disulfide-bonded. The active-site Proton donor is the D361. D382 serves as the catalytic Nucleophile. A disulfide bridge connects residues C395 and C429. The substrate site is built by R450 and W452.

This sequence in the N-terminal section; belongs to the PMEI family. In the C-terminal section; belongs to the pectinesterase family.

The protein localises to the secreted. Its subcellular location is the cell wall. It carries out the reaction [(1-&gt;4)-alpha-D-galacturonosyl methyl ester](n) + n H2O = [(1-&gt;4)-alpha-D-galacturonosyl](n) + n methanol + n H(+). It participates in glycan metabolism; pectin degradation; 2-dehydro-3-deoxy-D-gluconate from pectin: step 1/5. Pectinesterase may play a role in cell wall metabolism during fruit growth and development prior to ripening and may be required for preparing cell walls for softening by polygalacturonase during fruit ripening. The sequence is that of Pectinesterase 1 (PME1.9) from Solanum lycopersicum (Tomato).